A 725-amino-acid polypeptide reads, in one-letter code: Ribonuclease R (725 aa).

The region spanning 264–592 is the RNB domain; that stretch reads RQDLTDLAFV…IHRLLWMHLF (329 aa). Positions 644 to 725 constitute an S1 motif domain; sequence GKTFSGFISA…IQKRAILTLI (82 aa).

Belongs to the RNR ribonuclease family. RNase R subfamily.

It is found in the cytoplasm. It catalyses the reaction Exonucleolytic cleavage in the 3'- to 5'-direction to yield nucleoside 5'-phosphates.. Functionally, 3'-5' exoribonuclease that releases 5'-nucleoside monophosphates and is involved in maturation of structured RNAs. This is Ribonuclease R from Mycoplasma genitalium (strain ATCC 33530 / DSM 19775 / NCTC 10195 / G37) (Mycoplasmoides genitalium).